A 959-amino-acid chain; its full sequence is Lon protease homolog, mitochondrial (959 aa).

The N-terminal 67 residues, 1–67, are a transit peptide targeting the mitochondrion; the sequence is MAASTGYVRL…GPAIGGQWRG (67 aa). Disordered stretches follow at residues 77 to 102 and 218 to 257; these read GAFS…GSAG and RQLE…HPAE. Gly residues predominate over residues 91–102; it reads EEGAGGAGGSAG. The 247-residue stretch at 124 to 370 folds into the Lon N-terminal domain; that stretch reads LPLIAITRNP…KALSLLKKEF (247 aa). The span at 233–243 shows a compositional bias: basic residues; sequence HKPRRKSKRGK. A compositionally biased stretch (basic and acidic residues) spans 244–256; the sequence is KEAEDELSARHPA. 523 to 530 lines the ATP pocket; sequence GPPGVGKT. The 191-residue stretch at 759–949 folds into the Lon proteolytic domain; that stretch reads VTPPGVVMGL…REIFDIAFPD (191 aa). Active-site residues include serine 855 and lysine 898.

It belongs to the peptidase S16 family. As to quaternary structure, homohexamer. Organized in a ring with a central cavity. The ATP-binding and proteolytic domains (AP-domain) form a hexameric chamber, while the N-terminal domain is arranged as a trimer of dimers. DNA and RNA binding is stimulated by substrate and inhibited by ATP binding. Interacts with TWNK and mitochondrial DNA polymerase subunit POLG. As to expression, duodenum, heart, lung and liver, but not thymus.

Its subcellular location is the mitochondrion matrix. The enzyme catalyses Hydrolysis of proteins in presence of ATP.. With respect to regulation, peptidase activity is subject to substrate inhibition by ATP. Its function is as follows. ATP-dependent serine protease that mediates the selective degradation of misfolded, unassembled or oxidatively damaged polypeptides as well as certain short-lived regulatory proteins in the mitochondrial matrix. Endogenous substrates include mitochondrial steroidogenic acute regulatory (StAR) protein, DELE1, helicase Twinkle (TWNK) and the large ribosomal subunit protein MRPL32/bL32m. MRPL32/bL32m is protected from degradation by LONP1 when it is bound to a nucleic acid (RNA), but TWNK is not. May also have a chaperone function in the assembly of inner membrane protein complexes. Participates in the regulation of mitochondrial gene expression and in the maintenance of the integrity of the mitochondrial genome. Binds to mitochondrial promoters and RNA in a single-stranded, site-specific, and strand-specific manner. May regulate mitochondrial DNA replication and/or gene expression using site-specific, single-stranded DNA binding to target the degradation of regulatory proteins binding to adjacent sites in mitochondrial promoters. This chain is Lon protease homolog, mitochondrial, found in Homo sapiens (Human).